A 226-amino-acid chain; its full sequence is Ribosomal RNA small subunit methyltransferase G (226 aa).

S-adenosyl-L-methionine-binding positions include G83, F88, 136-137, and R152; that span reads IE. Positions 199-226 are disordered; sequence FSPSQSDPEGSVLKVRGLHGPDGQPHRR.

Belongs to the methyltransferase superfamily. RNA methyltransferase RsmG family.

It localises to the cytoplasm. The catalysed reaction is guanosine(527) in 16S rRNA + S-adenosyl-L-methionine = N(7)-methylguanosine(527) in 16S rRNA + S-adenosyl-L-homocysteine. Its function is as follows. Specifically methylates the N7 position of guanine in position 527 of 16S rRNA. This Parvibaculum lavamentivorans (strain DS-1 / DSM 13023 / NCIMB 13966) protein is Ribosomal RNA small subunit methyltransferase G.